A 102-amino-acid polypeptide reads, in one-letter code: MSIPLYEVLILASILFAMGLACVVAWRANVIMMLIGIEIMLNAVMLTFVGGSAHWGIAEGQVFSLMIMALTSAEVSLALAMVAYLHRRKQSVDTDDFSSMKG.

3 helical membrane-spanning segments follow: residues 5-25 (LYEVLILASILFAMGLACVVA), 30-50 (VIMMLIGIEIMLNAVMLTFVG), and 62-82 (VFSLMIMALTSAEVSLALAMV).

This sequence belongs to the complex I subunit 4L family. In terms of assembly, NDH-1 is composed of 14 different subunits. Subunits NuoA, H, J, K, L, M, N constitute the membrane sector of the complex.

It is found in the cell inner membrane. It catalyses the reaction a quinone + NADH + 5 H(+)(in) = a quinol + NAD(+) + 4 H(+)(out). Its function is as follows. NDH-1 shuttles electrons from NADH, via FMN and iron-sulfur (Fe-S) centers, to quinones in the respiratory chain. The immediate electron acceptor for the enzyme in this species is believed to be ubiquinone. Couples the redox reaction to proton translocation (for every two electrons transferred, four hydrogen ions are translocated across the cytoplasmic membrane), and thus conserves the redox energy in a proton gradient. The protein is NADH-quinone oxidoreductase subunit K 1 of Geobacter sp. (strain M21).